Consider the following 179-residue polypeptide: Large ribosomal subunit protein uL6 (179 aa).

Belongs to the universal ribosomal protein uL6 family. As to quaternary structure, part of the 50S ribosomal subunit.

Functionally, this protein binds to the 23S rRNA, and is important in its secondary structure. It is located near the subunit interface in the base of the L7/L12 stalk, and near the tRNA binding site of the peptidyltransferase center. This Spiroplasma citri protein is Large ribosomal subunit protein uL6.